The sequence spans 306 residues: Manganese transport system membrane protein MntB (306 aa).

The Periplasmic portion of the chain corresponds to 1–25 (MNQLVVAFPFWHWLVEPLQYEFLIR). The chain crosses the membrane as a helical span at residues 26 to 46 (AIWVSAFVGLVCAVLSCYITL). At 47–48 (KG) the chain is on the cytoplasmic side. Residues 49 to 69 (WSLMGDAISHAVVPGVVLAYA) form a helical membrane-spanning segment. The Periplasmic portion of the chain corresponds to 70-71 (LN). A helical transmembrane segment spans residues 72-92 (IPFAIGAFTFGFGATVAIGYV). Residues 93–101 (KSKTRLKED) lie on the Cytoplasmic side of the membrane. A helical transmembrane segment spans residues 102 to 122 (AVIGIVFTGFFALGLVLVTKI). Over 123–141 (PSNVDLFHILFGNVLGISQ) the chain is Periplasmic. Residues 142–162 (QDIIQTLIAGSITLIVILLRR) form a helical membrane-spanning segment. Residues 163–179 (KDLLLFCFDPNHAKAIG) lie on the Cytoplasmic side of the membrane. A helical transmembrane segment spans residues 180–200 (LRTQVMYYTLLSVLALTIVAA). Residues 201 to 202 (LQ) lie on the Periplasmic side of the membrane. A helical membrane pass occupies residues 203 to 223 (TAGIILVISMLVTPGSIGYLL). Over 224 to 228 (SDRFD) the chain is Cytoplasmic. Residues 229–249 (HMLWYSVVSSVLSCVLGTYLS) form a helical membrane-spanning segment. Topologically, residues 250–255 (YHFDVS) are periplasmic. The chain crosses the membrane as a helical span at residues 256–276 (TGGMIVVILTTLFVIAMIGAP). The Cytoplasmic portion of the chain corresponds to 277–306 (KYGILAQEWRKRSGPNPEDDENQTVVVDQV).

Belongs to the ABC-3 integral membrane protein family.

Its subcellular location is the cell membrane. Part of an ATP-driven transport system for manganese. The chain is Manganese transport system membrane protein MntB (mntB) from Synechocystis sp. (strain ATCC 27184 / PCC 6803 / Kazusa).